The chain runs to 245 residues: 14-3-3 protein zeta (245 aa).

Belongs to the 14-3-3 family. In terms of assembly, homodimer.

It localises to the cytoplasm. In terms of biological role, adapter protein implicated in the regulation of a large spectrum of both general and specialized signaling pathways. Binds to a large number of partners, usually by recognition of a phosphoserine or phosphothreonine motif. Binding generally results in the modulation of the activity of the binding partner. This is 14-3-3 protein zeta (ywhaz) from Xenopus tropicalis (Western clawed frog).